We begin with the raw amino-acid sequence, 425 residues long: MLDVKRIRNDFDALSEKLATRGVVAETLNELKELDVKRRELLIKSEELKAQRNIASDDIAQAKRNKEDASEQIAAMQKVSAEIKEIDAELAAIDEKLNTIIVTLPNIPNDSVPVGADEDENVEVRRWGTPRDFDFEVKAHWDLGEDLGILDWERGAKVTGSRFLFYKGLGARLERAIYNFMLDEHAKEGYTEMITPYMVNHDSMFGTGQYPKFKEDTFELDGTDYVLIPTAEVPLTNYYRGEILDGKELPIYFTALSPSFRSEAGSAGRDTRGLIRLHQFHKVEMVKFSKPEDSYDELEKMVVNAENILQKLNLPYRVITLCTGDMGFSAAKTYDLEVWIPAQNTYREISSCSNTEDFQARRAQIRYRDEADGKVKLLHTLNGSGLAVGRTVAAILENYQNEDGSVTIPEVLRPYMGGAEVILPK.

L-serine is bound at residue Thr230–Glu232. ATP is bound at residue Arg261 to Glu263. Residue Glu284 participates in L-serine binding. Glu348–Ser351 is a binding site for ATP. Residue Ser384 coordinates L-serine.

It belongs to the class-II aminoacyl-tRNA synthetase family. Type-1 seryl-tRNA synthetase subfamily. As to quaternary structure, homodimer. The tRNA molecule binds across the dimer.

Its subcellular location is the cytoplasm. The catalysed reaction is tRNA(Ser) + L-serine + ATP = L-seryl-tRNA(Ser) + AMP + diphosphate + H(+). The enzyme catalyses tRNA(Sec) + L-serine + ATP = L-seryl-tRNA(Sec) + AMP + diphosphate + H(+). Its pathway is aminoacyl-tRNA biosynthesis; selenocysteinyl-tRNA(Sec) biosynthesis; L-seryl-tRNA(Sec) from L-serine and tRNA(Sec): step 1/1. Catalyzes the attachment of serine to tRNA(Ser). Is also able to aminoacylate tRNA(Sec) with serine, to form the misacylated tRNA L-seryl-tRNA(Sec), which will be further converted into selenocysteinyl-tRNA(Sec). The polypeptide is Serine--tRNA ligase (Streptococcus thermophilus (strain ATCC BAA-491 / LMD-9)).